Here is a 215-residue protein sequence, read N- to C-terminus: Pyridoxine/pyridoxamine 5'-phosphate oxidase (215 aa).

Substrate-binding positions include 9–12 and K69; that span reads RRDY. FMN is bound by residues 64–69, 79–80, K86, and Q108; these read RILLLK and FT. Positions 126, 130, and 134 each coordinate substrate. FMN is bound by residues 143 to 144 and W188; that span reads QS. Residue 194 to 196 participates in substrate binding; it reads RLH. R198 contributes to the FMN binding site.

This sequence belongs to the pyridoxamine 5'-phosphate oxidase family. In terms of assembly, homodimer. FMN serves as cofactor.

It catalyses the reaction pyridoxamine 5'-phosphate + O2 + H2O = pyridoxal 5'-phosphate + H2O2 + NH4(+). The catalysed reaction is pyridoxine 5'-phosphate + O2 = pyridoxal 5'-phosphate + H2O2. Its pathway is cofactor metabolism; pyridoxal 5'-phosphate salvage; pyridoxal 5'-phosphate from pyridoxamine 5'-phosphate: step 1/1. It participates in cofactor metabolism; pyridoxal 5'-phosphate salvage; pyridoxal 5'-phosphate from pyridoxine 5'-phosphate: step 1/1. Catalyzes the oxidation of either pyridoxine 5'-phosphate (PNP) or pyridoxamine 5'-phosphate (PMP) into pyridoxal 5'-phosphate (PLP). In Pseudomonas fluorescens (strain Pf0-1), this protein is Pyridoxine/pyridoxamine 5'-phosphate oxidase.